The sequence spans 399 residues: Succinate--CoA ligase [ADP-forming] subunit beta (399 aa).

Residues 9–254 (KELLAKYGVG…ETEEDPAEIE (246 aa)) enclose the ATP-grasp domain. ATP contacts are provided by residues Lys46, 53–55 (GRG), Val112, and Glu117. Residues Asn209 and Asp223 each contribute to the Mg(2+) site. Substrate is bound by residues Asn274 and 331-333 (GIM).

It belongs to the succinate/malate CoA ligase beta subunit family. Heterotetramer of two alpha and two beta subunits. Requires Mg(2+) as cofactor.

It carries out the reaction succinate + ATP + CoA = succinyl-CoA + ADP + phosphate. It catalyses the reaction GTP + succinate + CoA = succinyl-CoA + GDP + phosphate. It participates in carbohydrate metabolism; tricarboxylic acid cycle; succinate from succinyl-CoA (ligase route): step 1/1. In terms of biological role, succinyl-CoA synthetase functions in the citric acid cycle (TCA), coupling the hydrolysis of succinyl-CoA to the synthesis of either ATP or GTP and thus represents the only step of substrate-level phosphorylation in the TCA. The beta subunit provides nucleotide specificity of the enzyme and binds the substrate succinate, while the binding sites for coenzyme A and phosphate are found in the alpha subunit. In Novosphingobium aromaticivorans (strain ATCC 700278 / DSM 12444 / CCUG 56034 / CIP 105152 / NBRC 16084 / F199), this protein is Succinate--CoA ligase [ADP-forming] subunit beta.